Reading from the N-terminus, the 223-residue chain is Protein UGX2 (223 aa).

Residues 78 to 95 (SNKRAKMKSKTKLTRTAK) are compositionally biased toward basic residues. The tract at residues 78–117 (SNKRAKMKSKTKLTRTAKQRRESPVCERDESDEDNDSDHY) is disordered. Residues 96-105 (QRRESPVCER) are compositionally biased toward basic and acidic residues.

In Saccharomyces cerevisiae (strain ATCC 204508 / S288c) (Baker's yeast), this protein is Protein UGX2 (UGX2).